A 367-amino-acid polypeptide reads, in one-letter code: Cellular tumor antigen p53 (367 aa).

A transcription activation (acidic) region spans residues 1–47 (MEEENISLPLSQDTFQDLWDNVSAPPISTIQTAALENEAWPAERQMN). The DNA-binding element occupies 86 to 273 (DYPGEYGFKL…KTEETNSTKM (188 aa)). Zn(2+)-binding residues include C160, H163, C219, and C223. The interaction with DNA stretch occupies residues 254–261 (RVCACPGR). Residues 262-279 (DRKTEETNSTKMQNDAKD) are compositionally biased toward basic and acidic residues. 2 disordered regions span residues 262-306 (DRKT…AEED) and 332-367 (DLLENKPKSKATHRPDGPIPPSGKRLLHRGEKSDSD). Positions 282-300 (KRKSVPTPDSTTIKKSKTA) match the Bipartite nuclear localization signal motif. The segment covering 291-302 (STTIKKSKTASS) has biased composition (low complexity). The oligomerization stretch occupies residues 308–337 (NEVYTLQIRGRKRYEMLKKINDGLDLLENK). Positions 322 to 333 (EMLKKINDGLDL) match the Nuclear export signal motif. The interval 342-363 (ATHRPDGPIPPSGKRLLHRGEK) is basic (repression of DNA-binding).

The protein belongs to the p53 family. In terms of assembly, binds DNA as a homotetramer. The cofactor is Zn(2+).

It localises to the cytoplasm. The protein resides in the nucleus. In terms of biological role, multifunctional transcription factor that induces cell cycle arrest, DNA repair or apoptosis upon binding to its target DNA sequence. Acts as a tumor suppressor in many tumor types; induces growth arrest or apoptosis depending on the physiological circumstances and cell type. Negatively regulates cell division by controlling expression of a set of genes required for this process. One of the activated genes is an inhibitor of cyclin-dependent kinases. Apoptosis induction seems to be mediated either by stimulation of BAX and FAS antigen expression, or by repression of Bcl-2 expression. The protein is Cellular tumor antigen p53 (tp53) of Tetraodon miurus (Congo puffer).